Here is a 502-residue protein sequence, read N- to C-terminus: Bone morphogenetic protein receptor type-1B (502 aa).

The N-terminal stretch at 1 to 13 (MLLRSAGKLNVGT) is a signal peptide. Residues 1–25 (MLLRSAGKLNVGTKKEDGESTAPTP) form a disordered region. Residues 14 to 126 (KKEDGESTAP…DFVDGPIHHR (113 aa)) lie on the Extracellular side of the membrane. 5 disulfides stabilise this stretch: Cys-32–Cys-53, Cys-34–Cys-38, Cys-47–Cys-71, Cys-81–Cys-95, and Cys-96–Cys-102. A helical transmembrane segment spans residues 127–148 (ALLISVTVCSLLLVLIILFCYF). Residues 149-502 (RYKRQETRPR…KMSESQDIKL (354 aa)) lie on the Cytoplasmic side of the membrane. One can recognise a GS domain in the interval 174–203 (ESLRDLIEQSQSSGSGSGLPLLVQRTIAKQ). The 291-residue stretch at 204–494 (IQMVKQIGKG…LRVKKTLAKM (291 aa)) folds into the Protein kinase domain. Residues 210 to 218 (IGKGRYGEV) and Lys-231 contribute to the ATP site. The Proton acceptor role is filled by Asp-332.

This sequence belongs to the protein kinase superfamily. TKL Ser/Thr protein kinase family. TGFB receptor subfamily. In terms of assembly, interacts with high affinity with GDF5; positively regulates chondrocyte differentiation. Interacts with SCUBE3. Interacts with TSC22D1/TSC-22. Interacts with TGFBR3. Requires Mg(2+) as cofactor. It depends on Mn(2+) as a cofactor. Autophosphorylated.

It is found in the cell membrane. The catalysed reaction is L-threonyl-[receptor-protein] + ATP = O-phospho-L-threonyl-[receptor-protein] + ADP + H(+). It carries out the reaction L-seryl-[receptor-protein] + ATP = O-phospho-L-seryl-[receptor-protein] + ADP + H(+). In terms of biological role, on ligand binding, forms a receptor complex consisting of two type II and two type I transmembrane serine/threonine kinases. Type II receptors phosphorylate and activate type I receptors which autophosphorylate, then bind and activate SMAD transcriptional regulators. Receptor for BMP7/OP-1 and GDF5. Positively regulates chondrocyte differentiation through GDF5 interaction. This chain is Bone morphogenetic protein receptor type-1B (BMPR1B), found in Homo sapiens (Human).